A 68-amino-acid chain; its full sequence is Small ribosomal subunit protein bS21 (68 aa).

It belongs to the bacterial ribosomal protein bS21 family.

The sequence is that of Small ribosomal subunit protein bS21 from Ruegeria pomeroyi (strain ATCC 700808 / DSM 15171 / DSS-3) (Silicibacter pomeroyi).